The chain runs to 2190 residues: Integrator complex subunit 1 (2190 aa).

The segment at 1-61 is disordered; it reads MNRAKPTTVR…GLPSERKRDA (61 aa). Ser-13 is modified (phosphoserine). Positions 34–44 are enriched in polar residues; the sequence is GQANESKTAST. N6-acetyllysine is present on Lys-47. Thr-83 carries the post-translational modification Phosphothreonine. 3 positions are modified to phosphoserine: Ser-87, Ser-307, and Ser-924. The disordered stretch occupies residues 922–945; the sequence is AASGEEDDEGESKEQKAKKRQRQQ. Acidic residues predominate over residues 923–932; it reads ASGEEDDEGE. Residues 1159–1179 form a helical membrane-spanning segment; it reads TATMHILVVHAMVILLTLGPP. A disordered region spans residues 1311 to 1334; the sequence is SLPPRRDSTEAPKPKSSPEQPIGQ. Residues 1314–1323 show a composition bias toward basic and acidic residues; it reads PRRDSTEAPK. Phosphoserine occurs at positions 1318, 1326, 1327, and 1395.

It belongs to the Integrator subunit 1 family. Component of the Integrator complex, composed of core subunits INTS1, INTS2, INTS3, INTS4, INTS5, INTS6, INTS7, INTS8, INTS9/RC74, INTS10, INTS11/CPSF3L, INTS12, INTS13, INTS14 and INTS15. The core complex associates with protein phosphatase 2A subunits PPP2CA and PPP2R1A, to form the Integrator-PP2A (INTAC) complex. Interacts with ESRRB, ESRRB is not a core component of the Integrator complex and this association is a bridge for the interaction with the multiprotein complex Integrator; attracts the transcriptional machinery.

Its subcellular location is the nucleus. It is found in the nucleus membrane. Its function is as follows. Component of the integrator complex, a multiprotein complex that terminates RNA polymerase II (Pol II) transcription in the promoter-proximal region of genes. The integrator complex provides a quality checkpoint during transcription elongation by driving premature transcription termination of transcripts that are unfavorably configured for transcriptional elongation: the complex terminates transcription by (1) catalyzing dephosphorylation of the C-terminal domain (CTD) of Pol II subunit POLR2A/RPB1 and SUPT5H/SPT5, (2) degrading the exiting nascent RNA transcript via endonuclease activity and (3) promoting the release of Pol II from bound DNA. The integrator complex is also involved in terminating the synthesis of non-coding Pol II transcripts, such as enhancer RNAs (eRNAs), small nuclear RNAs (snRNAs), telomerase RNAs and long non-coding RNAs (lncRNAs). Within the integrator complex, INTS1 is involved in the post-termination step: INTS1 displaces INTS3 and the SOSS factors, allowing the integrator complex to return to the closed conformation, ready to bind to the paused elongation complex for another termination cycle. Mediates recruitment of cytoplasmic dynein to the nuclear envelope, probably as component of the integrator complex. The sequence is that of Integrator complex subunit 1 from Homo sapiens (Human).